A 181-amino-acid chain; its full sequence is Large ribosomal subunit protein bL17 (181 aa).

The tract at residues 129–181 is disordered; sequence AEKSEKSAKTAKAAKAPAKKATAKKASTKAVAAKKKAVKKAQKKDRAASAARA. Positions 145–171 are enriched in basic residues; sequence PAKKATAKKASTKAVAAKKKAVKKAQK.

The protein belongs to the bacterial ribosomal protein bL17 family. In terms of assembly, part of the 50S ribosomal subunit. Contacts protein L32.

The sequence is that of Large ribosomal subunit protein bL17 from Bdellovibrio bacteriovorus (strain ATCC 15356 / DSM 50701 / NCIMB 9529 / HD100).